The primary structure comprises 877 residues: DNA polymerase I (877 aa).

A 5'-3' exonuclease domain is found at 177–270 (TPAQFIDLKA…LEDLVYSGPD (94 aa)). Positions 302-465 (DFTIVDQISQ…TEPILLEKLS (164 aa)) constitute a 3'-5' exonuclease domain.

Belongs to the DNA polymerase type-A family. As to quaternary structure, single-chain monomer with multiple functions.

The enzyme catalyses DNA(n) + a 2'-deoxyribonucleoside 5'-triphosphate = DNA(n+1) + diphosphate. Functionally, in addition to polymerase activity, this DNA polymerase exhibits 3'-5' and 5'-3' exonuclease activity. This chain is DNA polymerase I (polA), found in Streptococcus pneumoniae serotype 4 (strain ATCC BAA-334 / TIGR4).